The sequence spans 151 residues: Odorant-binding protein (151 aa).

Intrachain disulfides connect cysteine 38–cysteine 42 and cysteine 57–cysteine 149.

The protein belongs to the calycin superfamily. Lipocalin family. As to expression, expressed in salivary glands, hair and urine.

It is found in the secreted. May act as a pheromone. This chain is Odorant-binding protein, found in Phodopus sungorus (Striped hairy-footed hamster).